A 472-amino-acid chain; its full sequence is GTPase Der (472 aa).

EngA-type G domains lie at 3-166 and 178-351; these read AVIA…PPAE and IPVA…AAAH. GTP is bound by residues 9–16, 56–60, 118–121, 184–191, 231–235, and 296–299; these read GRPNVGKS, DTGGM, NKTD, DTAGV, and NKWD. Residues 352 to 436 form the KH-like domain; it reads RDLATPELND…PVRIECRASD (85 aa). Residues 434 to 472 are disordered; the sequence is ASDNPFADKPNQLTERQRRRRQRVIHHAKKREKKRKRRR. Over residues 450–472 the composition is skewed to basic residues; sequence QRRRRQRVIHHAKKREKKRKRRR.

It belongs to the TRAFAC class TrmE-Era-EngA-EngB-Septin-like GTPase superfamily. EngA (Der) GTPase family. Associates with the 50S ribosomal subunit.

GTPase that plays an essential role in the late steps of ribosome biogenesis. In Halorhodospira halophila (strain DSM 244 / SL1) (Ectothiorhodospira halophila (strain DSM 244 / SL1)), this protein is GTPase Der.